A 327-amino-acid polypeptide reads, in one-letter code: Ribosomal RNA small subunit methyltransferase H (327 aa).

S-adenosyl-L-methionine contacts are provided by residues Gly-41–His-43, Asp-60, Tyr-87, Asp-108, and Gln-115. Residues Ala-292–Arg-327 form a disordered region.

The protein belongs to the methyltransferase superfamily. RsmH family.

The protein localises to the cytoplasm. It catalyses the reaction cytidine(1402) in 16S rRNA + S-adenosyl-L-methionine = N(4)-methylcytidine(1402) in 16S rRNA + S-adenosyl-L-homocysteine + H(+). Its function is as follows. Specifically methylates the N4 position of cytidine in position 1402 (C1402) of 16S rRNA. The polypeptide is Ribosomal RNA small subunit methyltransferase H (Kocuria rhizophila (strain ATCC 9341 / DSM 348 / NBRC 103217 / DC2201)).